We begin with the raw amino-acid sequence, 384 residues long: GDP/UDP-N,N'-diacetylbacillosamine 2-epimerase (hydrolyzing) (384 aa).

The protein belongs to the UDP-N-acetylglucosamine 2-epimerase family.

The catalysed reaction is GDP-N,N'-diacetylbacillosamine + H2O = 2,4-diacetamido-2,4,6-trideoxy-alpha-D-mannopyranose + GDP + H(+). The enzyme catalyses UDP-N,N'-diacetylbacillosamine + H2O = 2,4-diacetamido-2,4,6-trideoxy-alpha-D-mannopyranose + UDP + H(+). Its function is as follows. Involved in biosynthesis of legionaminic acid (5,7-diamino-3,5,7,9-tetradeoxy-D-glycero-D-galacto-non-2-ulosonic acid)(Leg), a sialic acid-like derivative that is incorporated into flagellin via O-linkage to Ser/Thr. Catalyzes the conversion of GDP-N,N'-diacetylbacillosamine (Bac2Ac4Ac) into 2,4-diacetamido-2,4,6-trideoxymannose and GDP. It can also use UDP-N,N'-diacetylbacillosamine however it generates small quantities of 2,4-diacetamido-2,4,6-trideoxymannose. The protein is GDP/UDP-N,N'-diacetylbacillosamine 2-epimerase (hydrolyzing) (legG) of Campylobacter jejuni subsp. jejuni serotype O:2 (strain ATCC 700819 / NCTC 11168).